Here is a 475-residue protein sequence, read N- to C-terminus: E3 ubiquitin-protein ligase TRIM21 (475 aa).

Residues 16 to 55 (CPICLDPFVEPVSIECGHSFCQECISQVGKGGGSVCPVCR) form an RING-type zinc finger. Zn(2+)-binding residues include C92, H95, C114, and H120. The segment at 92–123 (CAVHGERLHLFCEKDGKALCWVCAQSRKHRDH) adopts a B box-type zinc-finger fold. Residues 128–238 (LEEAAQEYQE…ISELDRRCHS (111 aa)) adopt a coiled-coil conformation. Position 266 is a phosphoserine (S266). Positions 268-465 (ELRSVCHVPG…NTAPLTLCPL (198 aa)) constitute a B30.2/SPRY domain.

This sequence belongs to the TRIM/RBCC family. Homotrimer. Interacts (via C-terminus) with IRF8 (via C-terminus). Component of a SCF(SKP2)-like complex containing CUL1, SKP1, TRIM21 and SKP2. Interacts with CALR, CUL1, FBXW11, HSPA5, IKBKB, IRF3, SKP1 and VCP. Interacts with SKP2; the interaction with SKP2 does not depend on an intact F-box domain. Interacts (via N-terminus and C-terminus) with DCP2 (via N-terminus and C-terminus). Interacts with ULK1, BECN1 and with ATG8 family members, including GABARAP, GABARAPL1, GABARAPL2 and MAP1LC3C/LC3C. Interacts with TRIM21 and SQSTM1/sequestosome 1. Interacts with IRF3. Interacts (via the SPRY domain) with NMI (via coiled-coil domain); the interaction promotes 'Lys-63'-linked ubiquitination of NMI. Interacts with IFI35 and NMI; the interaction facilitates NMI-IFI35 complex formation. As to quaternary structure, (Microbial infection) Interacts (via B30.2/SPRY domain) with severe fever with thrombocytopenia syndrome virus (SFTSV) NSs; this interaction activates NFE2L2-mediated transcriptional activation of antioxidant genes. Post-translationally, autoubiquitinated; does not lead to its proteasomal degradation. Deubiquitinated by USP4; leading to its stabilization. As to expression, isoform 1 and isoform 2 are expressed in fetal and adult heart and fetal lung.

Its subcellular location is the cytoplasm. It is found in the cytoplasmic vesicle. The protein localises to the autophagosome. It localises to the nucleus. The protein resides in the P-body. Its subcellular location is the stress granule. The catalysed reaction is S-ubiquitinyl-[E2 ubiquitin-conjugating enzyme]-L-cysteine + [acceptor protein]-L-lysine = [E2 ubiquitin-conjugating enzyme]-L-cysteine + N(6)-ubiquitinyl-[acceptor protein]-L-lysine.. Its pathway is protein modification; protein ubiquitination. Functionally, E3 ubiquitin-protein ligase whose activity is dependent on E2 enzymes, UBE2D1, UBE2D2, UBE2E1 and UBE2E2. Forms a ubiquitin ligase complex in cooperation with the E2 UBE2D2 that is used not only for the ubiquitination of USP4 and IKBKB but also for its self-ubiquitination. Component of cullin-RING-based SCF (SKP1-CUL1-F-box protein) E3 ubiquitin-protein ligase complexes such as SCF(SKP2)-like complexes. A TRIM21-containing SCF(SKP2)-like complex is shown to mediate ubiquitination of CDKN1B ('Thr-187' phosphorylated-form), thereby promoting its degradation by the proteasome. Monoubiquitinates IKBKB that will negatively regulates Tax-induced NF-kappa-B signaling. Negatively regulates IFN-beta production post-pathogen recognition by catalyzing polyubiquitin-mediated degradation of IRF3. Mediates the ubiquitin-mediated proteasomal degradation of IgG1 heavy chain, which is linked to the VCP-mediated ER-associated degradation (ERAD) pathway. Promotes IRF8 ubiquitination, which enhanced the ability of IRF8 to stimulate cytokine genes transcription in macrophages. Plays a role in the regulation of the cell cycle progression. Enhances the decapping activity of DCP2. Exists as a ribonucleoprotein particle present in all mammalian cells studied and composed of a single polypeptide and one of four small RNA molecules. At least two isoforms are present in nucleated and red blood cells, and tissue specific differences in RO/SSA proteins have been identified. The common feature of these proteins is their ability to bind HY RNAs.2. Involved in the regulation of innate immunity and the inflammatory response in response to IFNG/IFN-gamma. Organizes autophagic machinery by serving as a platform for the assembly of ULK1, Beclin 1/BECN1 and ATG8 family members and recognizes specific autophagy targets, thus coordinating target recognition with assembly of the autophagic apparatus and initiation of autophagy. Also regulates autophagy through FIP200/RB1CC1 ubiquitination and subsequent decreased protein stability. Represses the innate antiviral response by facilitating the formation of the NMI-IFI35 complex through 'Lys-63'-linked ubiquitination of NMI. During viral infection, promotes cell pyroptosis by mediating 'Lys-6'-linked ubiquitination of ISG12a/IFI27, facilitating its translocation into the mitochondria and subsequent CASP3 activation. When up-regulated through the IFN/JAK/STAT signaling pathway, promotes 'Lys-27'-linked ubiquitination of MAVS, leading to the recruitment of TBK1 and up-regulation of innate immunity. Mediates 'Lys-63'-linked polyubiquitination of G3BP1 in response to heat shock, leading to stress granule disassembly. The sequence is that of E3 ubiquitin-protein ligase TRIM21 from Homo sapiens (Human).